The sequence spans 408 residues: 1-deoxy-D-xylulose 5-phosphate reductoisomerase (408 aa).

Positions 27, 28, 29, 30, 53, 54, 55, and 140 each coordinate NADPH. Lys-141 contacts 1-deoxy-D-xylulose 5-phosphate. Residue Glu-142 participates in NADPH binding. Position 166 (Asp-166) interacts with Mn(2+). 1-deoxy-D-xylulose 5-phosphate-binding residues include Ser-167, Glu-168, Ser-192, and His-215. Glu-168 is a binding site for Mn(2+). An NADPH-binding site is contributed by Gly-221. Positions 228, 233, 234, and 237 each coordinate 1-deoxy-D-xylulose 5-phosphate. Glu-237 serves as a coordination point for Mn(2+).

It belongs to the DXR family. Requires Mg(2+) as cofactor. Mn(2+) is required as a cofactor.

It carries out the reaction 2-C-methyl-D-erythritol 4-phosphate + NADP(+) = 1-deoxy-D-xylulose 5-phosphate + NADPH + H(+). Its pathway is isoprenoid biosynthesis; isopentenyl diphosphate biosynthesis via DXP pathway; isopentenyl diphosphate from 1-deoxy-D-xylulose 5-phosphate: step 1/6. Catalyzes the NADPH-dependent rearrangement and reduction of 1-deoxy-D-xylulose-5-phosphate (DXP) to 2-C-methyl-D-erythritol 4-phosphate (MEP). The polypeptide is 1-deoxy-D-xylulose 5-phosphate reductoisomerase (Nitratidesulfovibrio vulgaris (strain ATCC 29579 / DSM 644 / CCUG 34227 / NCIMB 8303 / VKM B-1760 / Hildenborough) (Desulfovibrio vulgaris)).